We begin with the raw amino-acid sequence, 79 residues long: ATP synthase subunit c (79 aa).

A run of 2 helical transmembrane segments spans residues 11-31 and 53-73; these read IAVA…IGIL and FFVV…LGLY.

The protein belongs to the ATPase C chain family. In terms of assembly, F-type ATPases have 2 components, F(1) - the catalytic core - and F(0) - the membrane proton channel. F(1) has five subunits: alpha(3), beta(3), gamma(1), delta(1), epsilon(1). F(0) has three main subunits: a(1), b(2) and c(10-14). The alpha and beta chains form an alternating ring which encloses part of the gamma chain. F(1) is attached to F(0) by a central stalk formed by the gamma and epsilon chains, while a peripheral stalk is formed by the delta and b chains.

It localises to the cell membrane. F(1)F(0) ATP synthase produces ATP from ADP in the presence of a proton or sodium gradient. F-type ATPases consist of two structural domains, F(1) containing the extramembraneous catalytic core and F(0) containing the membrane proton channel, linked together by a central stalk and a peripheral stalk. During catalysis, ATP synthesis in the catalytic domain of F(1) is coupled via a rotary mechanism of the central stalk subunits to proton translocation. Functionally, key component of the F(0) channel; it plays a direct role in translocation across the membrane. A homomeric c-ring of between 10-14 subunits forms the central stalk rotor element with the F(1) delta and epsilon subunits. The polypeptide is ATP synthase subunit c (Buchnera aphidicola subsp. Schizaphis graminum (strain Sg)).